Reading from the N-terminus, the 235-residue chain is MLLLISPKNIEEAKEAIAGGAHIIDVKNPPEGSLGANFPWVIEEVKNITPKNLLVSATVGDVPYKPGTVSLAALGVAVSGADYIKVGLYGTKTYYEAVDVMEKVVKAVKSVDKNKIVVAAGYADAYRVGAVDPLIIPKIARDSGCDVAMLDTALKDGMSLFDHLDEKLLKEFIEETRSYGLKSALAGSIKKEEIAILKKLGCDIVGIRGAACSYGDRNEGTIQKELVEELVKLCE.

The active-site Schiff-base intermediate with substrate is the Lys-27. The active-site Proton acceptor is Lys-85.

It belongs to the MfnB family.

It carries out the reaction 2 D-glyceraldehyde 3-phosphate = 4-(hydroxymethyl)-2-furancarboxaldehyde phosphate + phosphate + 2 H2O. It functions in the pathway cofactor biosynthesis; methanofuran biosynthesis. In terms of biological role, catalyzes the formation of 4-(hydroxymethyl)-2-furancarboxaldehyde phosphate (4-HFC-P) from two molecules of glyceraldehyde-3-P (GA-3-P). This Methanococcus aeolicus (strain ATCC BAA-1280 / DSM 17508 / OCM 812 / Nankai-3) protein is (5-formylfuran-3-yl)methyl phosphate synthase.